Here is a 719-residue protein sequence, read N- to C-terminus: Phenylalanine--tRNA ligase beta subunit, chloroplastic (719 aa).

Residues 318–403 (DHALNINLSI…RIYGYHKFRS (86 aa)) form the B5 domain. Asp381, Asp387, Glu390, and Glu391 together coordinate Mg(2+). One can recognise an FDX-ACB domain in the interval 625 to 718 (SKYPSIIRDL…IVKQLNLKIR (94 aa)).

Belongs to the phenylalanyl-tRNA synthetase beta subunit family. Type 1 subfamily. As to quaternary structure, tetramer of two alpha and two beta subunits. It depends on Mg(2+) as a cofactor.

The protein resides in the plastid. Its subcellular location is the chloroplast. It carries out the reaction tRNA(Phe) + L-phenylalanine + ATP = L-phenylalanyl-tRNA(Phe) + AMP + diphosphate + H(+). This chain is Phenylalanine--tRNA ligase beta subunit, chloroplastic, found in Pyropia yezoensis (Susabi-nori).